The primary structure comprises 362 residues: MLYDLLGGMAGDIQALNVFRYITFRTGGATVTALLISFLFGPRIIALLKAKQRRGQPIREDGPQTHIIQKQGTPTMGGFLILVGLVPSVLLWADWSNRYVWIVLFVTLGFGAVGFADDYLKVSKISPKGVPGRVKLFFEFVIALIAMWALVLVSSEPLQTALTVPFFKTLLIELGGFFFLFGALVIVGSSNAVNLTDGLDGLAIVPVMIAAASLGLIVYLVGNAVFADYLQIHFVPGTGELAVFCGALIGAGLGFLWYNAPPAMVFMGDTGSLALGGALGAIAVAAKHELVLAIIGGLFVLEAVSVIVQVASFKLTGKRVFRMAPLHHHFEQKGWAEPTVVVRFWIISVVLAMAGLATLKLR.

10 helical membrane-spanning segments follow: residues 28–48, 73–93, 100–120, 134–154, 169–189, 201–221, 241–261, 264–284, 290–310, and 339–359; these read GATV…IALL, TPTM…LLWA, VWIV…DDYL, VKLF…VLVS, TLLI…IVGS, GLAI…VYLV, LAVF…YNAP, MVFM…AIAV, LVLA…IVQV, and TVVV…LATL.

Belongs to the glycosyltransferase 4 family. MraY subfamily. The cofactor is Mg(2+).

It localises to the cell inner membrane. It carries out the reaction UDP-N-acetyl-alpha-D-muramoyl-L-alanyl-gamma-D-glutamyl-meso-2,6-diaminopimeloyl-D-alanyl-D-alanine + di-trans,octa-cis-undecaprenyl phosphate = di-trans,octa-cis-undecaprenyl diphospho-N-acetyl-alpha-D-muramoyl-L-alanyl-D-glutamyl-meso-2,6-diaminopimeloyl-D-alanyl-D-alanine + UMP. It functions in the pathway cell wall biogenesis; peptidoglycan biosynthesis. Functionally, catalyzes the initial step of the lipid cycle reactions in the biosynthesis of the cell wall peptidoglycan: transfers peptidoglycan precursor phospho-MurNAc-pentapeptide from UDP-MurNAc-pentapeptide onto the lipid carrier undecaprenyl phosphate, yielding undecaprenyl-pyrophosphoryl-MurNAc-pentapeptide, known as lipid I. In Parvibaculum lavamentivorans (strain DS-1 / DSM 13023 / NCIMB 13966), this protein is Phospho-N-acetylmuramoyl-pentapeptide-transferase.